Here is a 561-residue protein sequence, read N- to C-terminus: Terpene synthase 3 (561 aa).

4 residues coordinate Mg(2+): D315, D319, D458, and E466. The short motif at D315–D319 is the DDXXD motif element.

Belongs to the terpene synthase family. Tpsa subfamily. Mg(2+) serves as cofactor. Requires Mn(2+) as cofactor. Mostly expressed in stems amd leaves, and, to a lower extent, in roots and fruits.

It carries out the reaction (2E,6E)-farnesyl diphosphate = germacrene D + diphosphate. The enzyme catalyses (2E,6E)-farnesyl diphosphate = alpha-copaene + diphosphate. Its pathway is secondary metabolite biosynthesis; terpenoid biosynthesis. Sesquiterpene synthase involved in the biosynthesis of volatile compounds that contribute to the characteristic flavors of black pepper. Mediates the conversion of (2E,6E)-farnesyl diphosphate (FPP) into alpha-copaene and germacrene D. The polypeptide is Terpene synthase 3 (Piper nigrum (Black pepper)).